The following is a 400-amino-acid chain: Dual specificity mitogen-activated protein kinase kinase 2 (400 aa).

Residue Met1 is modified to N-acetylmethionine. Ser23 is modified (phosphoserine). Residues 72–369 (FERISELGAG…LKMLTNHTFI (298 aa)) enclose the Protein kinase domain. ATP contacts are provided by residues 78–86 (LGAGNGGVV) and Lys101. Asp194 functions as the Proton acceptor in the catalytic mechanism. Residues Ser222 and Ser226 each carry the (Microbial infection) O-acetylserine; by Yersinia YopJ; alternate modification. Position 222 is a phosphoserine; by RAF; alternate (Ser222). Position 226 is a phosphoserine; alternate (Ser226). Residues 286-310 (GEEGEPHSISPRPRPPGRPVSGHGM) are disordered. Residues Ser293, Ser295, and Ser306 each carry the phosphoserine modification. Thr394 and Thr396 each carry phosphothreonine.

Belongs to the protein kinase superfamily. STE Ser/Thr protein kinase family. MAP kinase kinase subfamily. In terms of assembly, interacts with MORG1. Interacts with SGK1. Interacts with KSR1. Interacts with KSR1 and BRAF; the interaction with KSR1 mediates KSR1-BRAF dimerization. Interacts with GLS. Mg(2+) is required as a cofactor. MAPKK is itself dependent on Ser/Thr phosphorylation for activity catalyzed by MAP kinase kinase kinases (RAF or MEKK1). Phosphorylated by MAP2K1/MEK1. Post-translationally, (Microbial infection) Acetylation of Ser-222 and Ser-226 by Yersinia YopJ prevents phosphorylation and activation, thus blocking the MAPK signaling pathway.

It is found in the cytoplasm. The protein localises to the membrane. The catalysed reaction is L-seryl-[protein] + ATP = O-phospho-L-seryl-[protein] + ADP + H(+). The enzyme catalyses L-threonyl-[protein] + ATP = O-phospho-L-threonyl-[protein] + ADP + H(+). It carries out the reaction L-tyrosyl-[protein] + ATP = O-phospho-L-tyrosyl-[protein] + ADP + H(+). Its function is as follows. Catalyzes the concomitant phosphorylation of a threonine and a tyrosine residue in a Thr-Glu-Tyr sequence located in MAP kinases. Activates the ERK1 and ERK2 MAP kinases. Activates BRAF in a KSR1 or KSR2-dependent manner; by binding to KSR1 or KSR2 releases the inhibitory intramolecular interaction between KSR1 or KSR2 protein kinase and N-terminal domains which promotes KSR1 or KSR2-BRAF dimerization and BRAF activation. This is Dual specificity mitogen-activated protein kinase kinase 2 (MAP2K2) from Homo sapiens (Human).